A 400-amino-acid chain; its full sequence is Large envelope protein (400 aa).

The residue at position 1 (M1) is an N-acetylmethionine. Disordered regions lie at residues 1–42 (MGGY…NNPD) and 84–118 (ILTT…SHPQ). G2 carries the N-myristoyl glycine; by host lipid modification. The tract at residues 2–119 (GGYSSKPRKG…PPLRDSHPQA (118 aa)) is pre-S1. The pre-S stretch occupies residues 2–174 (GGYSSKPRKG…FSRTGDPVPK (173 aa)). The Virion surface; in external conformation segment spans residues 2-181 (GGYSSKPRKG…VPKMENTTSG (180 aa)). Over 2–253 (GGYSSKPRKG…PGYRWMCLRR (252 aa)) the chain is Intravirion; in internal conformation. An N-linked (GlcNAc...) asparagine glycan is attached at Y4. Residues 120 to 174 (MQWNSTTFHQALLDPRVRGLYFPAGGSSSGTANPVPTTASPISSIFSRTGDPVPK) are pre-S2. A helical membrane pass occupies residues 182-202 (FLGPLLVLQAGFFLLTRILTI). Over 203-253 (PQSLDSWWTSLNFLGGAPACPGQNSQSPTSNHSPTSCPPICPGYRWMCLRR) the chain is Intravirion; in external conformation. The chain crosses the membrane as a helical span at residues 254–274 (FIIFLFILLLCLIFLLVLLDY). The Virion surface segment spans residues 275 to 348 (QGMLPVCPLI…WASVRFSWLS (74 aa)). N320 is a glycosylation site (N-linked (GlcNAc...) asparagine; by host). Residues 349–369 (LLAPFVQWFVGLSPTVWLSVI) form a helical membrane-spanning segment. Residues 370–375 (WMMWYW) are Intravirion-facing. Residues 376–398 (GPSLYNILSPFLPLLPIFFCLWV) traverse the membrane as a helical segment. The Virion surface portion of the chain corresponds to 399-400 (YI).

This sequence belongs to the orthohepadnavirus major surface antigen family. As to quaternary structure, in its internal form (Li-HBsAg), interacts with the capsid protein and with the isoform S. Interacts with host chaperone CANX. In terms of assembly, associates with host chaperone CANX through its pre-S2 N glycan; this association may be essential for isoform M proper secretion. Interacts with isoform L. Interacts with the antigens of satellite virus HDV (HDVAgs); this interaction is required for encapsidation of HDV genomic RNA. Post-translationally, isoform M is N-terminally acetylated by host at a ratio of 90%, and N-glycosylated by host at the pre-S2 region. In terms of processing, myristoylated.

The protein localises to the virion membrane. In terms of biological role, the large envelope protein exists in two topological conformations, one which is termed 'external' or Le-HBsAg and the other 'internal' or Li-HBsAg. In its external conformation the protein attaches the virus to cell receptors and thereby initiating infection. This interaction determines the species specificity and liver tropism. This attachment induces virion internalization predominantly through caveolin-mediated endocytosis. The large envelope protein also assures fusion between virion membrane and endosomal membrane. In its internal conformation the protein plays a role in virion morphogenesis and mediates the contact with the nucleocapsid like a matrix protein. Functionally, the middle envelope protein plays an important role in the budding of the virion. It is involved in the induction of budding in a nucleocapsid independent way. In this process the majority of envelope proteins bud to form subviral lipoprotein particles of 22 nm of diameter that do not contain a nucleocapsid. The chain is Large envelope protein from Homo sapiens (Human).